A 50-amino-acid chain; its full sequence is Insulin 2 (50 aa).

Cystine bridges form between Cys8–Cys36, Cys20–Cys49, and Cys35–Cys40.

This sequence belongs to the insulin family. Heterodimer of a B chain and an A chain linked by two disulfide bonds.

The protein resides in the secreted. Insulin decreases blood glucose concentration. It increases cell permeability to monosaccharides, amino acids and fatty acids. It accelerates glycolysis, the pentose phosphate cycle, and glycogen synthesis in liver. The chain is Insulin 2 (ins2) from Batrachoididae sp. (Toadfish).